Consider the following 524-residue polypeptide: Cytokinin dehydrogenase 4 (524 aa).

The N-terminal stretch at 1-26 (MTNTLCLSLITLITLFISLTPTLIKS) is a signal peptide. Asn-39 and Asn-58 each carry an N-linked (GlcNAc...) asparagine glycan. The FAD-binding PCMH-type domain occupies 60-249 (TDENPGAVLC…TRARIALDHA (190 aa)). 3 residues coordinate FAD: Ala-104, Gly-106, and Gly-108. Position 109 is a pros-8alpha-FAD histidine (His-109). Residues Ser-110 and Gln-114 each contribute to the FAD site. Asn-124 is a glycosylation site (N-linked (GlcNAc...) asparagine). Asp-173, Ser-178, Ser-184, Ile-188, and Ile-239 together coordinate FAD. Asn-411 carries N-linked (GlcNAc...) asparagine glycosylation. Residues Tyr-482, Ser-517, and Gln-520 each coordinate FAD.

It belongs to the oxygen-dependent FAD-linked oxidoreductase family. FAD is required as a cofactor. As to expression, expressed in trichomes and in developing stomata of young growing leaves. Strong expression in stipules and in the root cap, but not detected in the root meristem.

Its subcellular location is the secreted. It localises to the extracellular space. It catalyses the reaction N(6)-dimethylallyladenine + A + H2O = 3-methyl-2-butenal + adenine + AH2. Functionally, catalyzes the oxidation of cytokinins, a family of N(6)-substituted adenine derivatives that are plant hormones, where the substituent is an isopentenyl group. The sequence is that of Cytokinin dehydrogenase 4 (CKX4) from Arabidopsis thaliana (Mouse-ear cress).